Consider the following 476-residue polypeptide: Viral inhibitor of caspase-8-induced apoptosis (476 aa).

Belongs to the herpesviridae US22 family. In terms of assembly, interacts with host pro-caspase-8/CASP8; this interaction inhibits CASP8 activation.

Functionally, plays a role in the inhibition of apoptosis by interacting with the pro-domain of pro-caspase-8/CASP8 and thus preventing its activation. In Human cytomegalovirus (strain Merlin) (HHV-5), this protein is Viral inhibitor of caspase-8-induced apoptosis (UL36).